Consider the following 572-residue polypeptide: Proline--tRNA ligase (572 aa).

The protein belongs to the class-II aminoacyl-tRNA synthetase family. ProS type 1 subfamily. Homodimer.

Its subcellular location is the cytoplasm. The catalysed reaction is tRNA(Pro) + L-proline + ATP = L-prolyl-tRNA(Pro) + AMP + diphosphate. Functionally, catalyzes the attachment of proline to tRNA(Pro) in a two-step reaction: proline is first activated by ATP to form Pro-AMP and then transferred to the acceptor end of tRNA(Pro). As ProRS can inadvertently accommodate and process non-cognate amino acids such as alanine and cysteine, to avoid such errors it has two additional distinct editing activities against alanine. One activity is designated as 'pretransfer' editing and involves the tRNA(Pro)-independent hydrolysis of activated Ala-AMP. The other activity is designated 'posttransfer' editing and involves deacylation of mischarged Ala-tRNA(Pro). The misacylated Cys-tRNA(Pro) is not edited by ProRS. This is Proline--tRNA ligase from Salmonella dublin (strain CT_02021853).